Here is a 304-residue protein sequence, read N- to C-terminus: MPQQLSPINIETKKAISNARLKPLDIHYNESKPTTIQNTGKLVRINFKGGYISGGFLPNEYVLSSLHIYWGKEDDYGSNHLIDVYKYSGEINLVHWNKKKYSSYEEAKKHDDGLIIISIFLQVSDHKNVYFQKIVNQLDSIRSANTSAPFDSVFYLDNLLPSTLDYFTYLGTTIKHSADAVWIIFPTPINIHSDQLSKFRTLLSSSNHDGKPYYITENYRNPYKLNDDTQVYYSGEIIRAATTSPARENYFMRWLSDLRETCFSYYQKYIEGNKTFAIIAIVFVFILTAILFLMSRRYSREKQN.

Positions 1 to 235 (MPQQLSPINI…NDDTQVYYSG (235 aa)) constitute an Alpha-carbonic anhydrase domain. The Virion surface portion of the chain corresponds to 1 to 275 (MPQQLSPINI…YQKYIEGNKT (275 aa)). A helical transmembrane segment spans residues 276–294 (FAIIAIVFVFILTAILFLM). The Intravirion segment spans residues 295–304 (SRRYSREKQN).

It belongs to the alpha-carbonic anhydrase family. As to quaternary structure, homodimer; disulfide-linked. In terms of processing, apparently non-glycosylated.

The protein resides in the virion membrane. Binds to chondroitin sulfate on the cell surface to provide virion attachment to target cell. This chain is Cell surface-binding protein OPG105 (OPG105), found in Vaccinia virus (strain Copenhagen) (VACV).